Consider the following 212-residue polypeptide: Large ribosomal subunit protein bL25 (212 aa).

It belongs to the bacterial ribosomal protein bL25 family. CTC subfamily. As to quaternary structure, part of the 50S ribosomal subunit; part of the 5S rRNA/L5/L18/L25 subcomplex. Contacts the 5S rRNA. Binds to the 5S rRNA independently of L5 and L18.

This is one of the proteins that binds to the 5S RNA in the ribosome where it forms part of the central protuberance. The chain is Large ribosomal subunit protein bL25 from Leptospira interrogans serogroup Icterohaemorrhagiae serovar copenhageni (strain Fiocruz L1-130).